Here is a 206-residue protein sequence, read N- to C-terminus: Large ribosomal subunit protein bL25 (206 aa).

Residues 168 to 206 form a disordered region; it reads DPEESVVTVEVPEDASESTAAPEAAAPAADAAAPAADAK. Over residues 184-206 the composition is skewed to low complexity; the sequence is ESTAAPEAAAPAADAAAPAADAK.

This sequence belongs to the bacterial ribosomal protein bL25 family. CTC subfamily. Part of the 50S ribosomal subunit; part of the 5S rRNA/L5/L18/L25 subcomplex. Contacts the 5S rRNA. Binds to the 5S rRNA independently of L5 and L18.

Functionally, this is one of the proteins that binds to the 5S RNA in the ribosome where it forms part of the central protuberance. In Bifidobacterium longum (strain DJO10A), this protein is Large ribosomal subunit protein bL25.